Consider the following 367-residue polypeptide: Deoxyhypusine synthase-like protein (367 aa).

The disordered stretch occupies residues 1-23; that stretch reads MKSLFQRRASKVRETEAMNAPVP.

This sequence belongs to the deoxyhypusine synthase family.

This Caulobacter vibrioides (strain ATCC 19089 / CIP 103742 / CB 15) (Caulobacter crescentus) protein is Deoxyhypusine synthase-like protein.